A 404-amino-acid polypeptide reads, in one-letter code: MKRTIIMMLDSFGVGASADAASFGDVGSDTFGHIAKACAEGKADIGREGPLKLPNLARLGLGHAAMESTGAFAPGFGDNVELIGAYGHAQELSSGKDTPSGHWEMAGVPVLFEWGYFSEHQNSFPKELTDKILARAGLDGFLGNCHASGTTILEELGEEHMRSGKPIFYTSADSVFQIACHEETFGLDNLYRLCEITREELAPYNIGRVIARPFNGTGQSDFARTGNRKDYSLEPPAKTVLDKLKAAGGEVVSVGKIADIYAYCGITKKVKANGLEDLFDATLAEVKSAGDNTIVFTNFVDFDSHYGHRRDVAGYAKGLEYFDARLPEMLALLGEDDLLILTADHGCDPTWQGTDHTREYVPVLAYGAGLKAGSLGRRNSFADIGQSIASHFKLEPMAYGESFI.

The Mn(2+) site is built by D10, D303, H308, D344, H345, and H356.

It belongs to the phosphopentomutase family. Mn(2+) is required as a cofactor.

The protein resides in the cytoplasm. It catalyses the reaction 2-deoxy-alpha-D-ribose 1-phosphate = 2-deoxy-D-ribose 5-phosphate. The enzyme catalyses alpha-D-ribose 1-phosphate = D-ribose 5-phosphate. The protein operates within carbohydrate degradation; 2-deoxy-D-ribose 1-phosphate degradation; D-glyceraldehyde 3-phosphate and acetaldehyde from 2-deoxy-alpha-D-ribose 1-phosphate: step 1/2. Functionally, isomerase that catalyzes the conversion of deoxy-ribose 1-phosphate (dRib-1-P) and ribose 1-phosphate (Rib-1-P) to deoxy-ribose 5-phosphate (dRib-5-P) and ribose 5-phosphate (Rib-5-P), respectively. This Shewanella putrefaciens (strain CN-32 / ATCC BAA-453) protein is Phosphopentomutase.